The sequence spans 125 residues: Small ribosomal subunit protein eS8 (125 aa).

A disordered region spans residues Met1–Arg20.

This sequence belongs to the eukaryotic ribosomal protein eS8 family. In terms of assembly, part of the 30S ribosomal subunit.

The sequence is that of Small ribosomal subunit protein eS8 (rps8e) from Archaeoglobus fulgidus (strain ATCC 49558 / DSM 4304 / JCM 9628 / NBRC 100126 / VC-16).